We begin with the raw amino-acid sequence, 335 residues long: Fructose-1,6-bisphosphatase class 1 1 (335 aa).

Positions 92, 114, 116, and 117 each coordinate Mg(2+). Substrate contacts are provided by residues Asp117–Ser120, Asn209, and Lys275. Glu281 serves as a coordination point for Mg(2+).

This sequence belongs to the FBPase class 1 family. Homotetramer. The cofactor is Mg(2+).

It is found in the cytoplasm. The catalysed reaction is beta-D-fructose 1,6-bisphosphate + H2O = beta-D-fructose 6-phosphate + phosphate. It functions in the pathway carbohydrate biosynthesis; gluconeogenesis. In Polaromonas naphthalenivorans (strain CJ2), this protein is Fructose-1,6-bisphosphatase class 1 1.